The primary structure comprises 259 residues: Phosphatidylserine decarboxylase proenzyme (259 aa).

Ser183 acts as the Schiff-base intermediate with substrate; via pyruvic acid in catalysis. Ser183 carries the pyruvic acid (Ser); by autocatalysis modification.

The protein belongs to the phosphatidylserine decarboxylase family. PSD-A subfamily. In terms of assembly, heterodimer of a large membrane-associated beta subunit and a small pyruvoyl-containing alpha subunit. Pyruvate serves as cofactor. Is synthesized initially as an inactive proenzyme. Formation of the active enzyme involves a self-maturation process in which the active site pyruvoyl group is generated from an internal serine residue via an autocatalytic post-translational modification. Two non-identical subunits are generated from the proenzyme in this reaction, and the pyruvate is formed at the N-terminus of the alpha chain, which is derived from the carboxyl end of the proenzyme. The post-translation cleavage follows an unusual pathway, termed non-hydrolytic serinolysis, in which the side chain hydroxyl group of the serine supplies its oxygen atom to form the C-terminus of the beta chain, while the remainder of the serine residue undergoes an oxidative deamination to produce ammonia and the pyruvoyl prosthetic group on the alpha chain.

It localises to the cell membrane. The catalysed reaction is a 1,2-diacyl-sn-glycero-3-phospho-L-serine + H(+) = a 1,2-diacyl-sn-glycero-3-phosphoethanolamine + CO2. It functions in the pathway phospholipid metabolism; phosphatidylethanolamine biosynthesis; phosphatidylethanolamine from CDP-diacylglycerol: step 2/2. Its function is as follows. Catalyzes the formation of phosphatidylethanolamine (PtdEtn) from phosphatidylserine (PtdSer). This is Phosphatidylserine decarboxylase proenzyme from Neisseria gonorrhoeae (strain NCCP11945).